A 591-amino-acid polypeptide reads, in one-letter code: MRSHYCGDVNKSHVGQEVTLVGWVNRSRDLGGVIFLDLRDREGLVQVVYDPDLPDVFDVASSLRAEFCVQVKGVVRPRPDSQVNSQMKTGEIEVLGKALTIINAADPLPLSLDNHQNNSEEARLKYRYLDLRRPEMAQRLIFRAKVTSFVRRFMDGNGFLDIETPILTKATPEGARDYLVPSRTYKGQFFALPQSPQLFKQLLMMSGFDRYYQIVKCFRDEDLRADRQPEFTQIDIETSFMTSDQVMETTERMIRNLFLELMNVDLGDFPKMTWDEAMRRFGSDKPDLRNPLELVDVADLLKAVEFAVFSGPANDEEGRVAALRIPGGAELSRKQIDDYTKFVGIYGARGLAWMKVNNLAAGVEGIQSPVAKFLNEDIIKEIIARTKAADGDIIFFGADKANVVAESMGALRLKAGEDFKLLEGEWRPLWVVDFPMFEKADGRFYAVHHPFTAPRGVTAAELEASPGKAVSDAYDMVLNGVELGGGSVRIHNGDMQSTVFRILGIDDEEAKEKFGFLLDALRFGTPPHAGLAFGLDRLVMLMTGASSIRDVMAFPKTTTAACPLTNAPGHANPDQLVELGIAVLPKEPKQD.

Residue E173 participates in L-aspartate binding. The aspartate stretch occupies residues 197-200 (QLFK). R219 contacts L-aspartate. ATP-binding positions include 219–221 (RDE) and Q228. An L-aspartate-binding site is contributed by H448. Residue E482 participates in ATP binding. An L-aspartate-binding site is contributed by R489. 534–537 (GLDR) serves as a coordination point for ATP.

This sequence belongs to the class-II aminoacyl-tRNA synthetase family. Type 1 subfamily. In terms of assembly, homodimer.

The protein resides in the cytoplasm. The enzyme catalyses tRNA(Asp) + L-aspartate + ATP = L-aspartyl-tRNA(Asp) + AMP + diphosphate. Functionally, catalyzes the attachment of L-aspartate to tRNA(Asp) in a two-step reaction: L-aspartate is first activated by ATP to form Asp-AMP and then transferred to the acceptor end of tRNA(Asp). The polypeptide is Aspartate--tRNA ligase (Shewanella amazonensis (strain ATCC BAA-1098 / SB2B)).